A 356-amino-acid chain; its full sequence is Cdc42 effector protein 4 (356 aa).

Position 5 is an N6-methyllysine (Lys5). The residue at position 18 (Ser18) is a Phosphoserine. In terms of domain architecture, CRIB spans 27–41 (ISAPLGDFRHTMHVG). The interval 51-102 (SFLNSKAGEPDGESLDEQPSSSSSKRSLLSRKFRGSKRSQSVTRGEREQRDM) is disordered. Phosphoserine is present on Ser64. The segment covering 78–87 (LLSRKFRGSK) has biased composition (basic residues). Ser105, Ser109, and Ser118 each carry phosphoserine. 2 disordered regions span residues 122-182 (LNEK…LDEQ) and 257-356 (VAAP…EIRV). Residues 123–132 (NEKEAAEKGT) show a composition bias toward basic and acidic residues. Positions 133–143 (SKLPKSLSSSP) are enriched in low complexity. Residues Ser138, Ser140, Ser142, Ser174, Ser292, and Ser295 each carry the phosphoserine modification. Over residues 287–315 (AAAAPSPGSARSMGSHTTRDSSSLSSCTS) the composition is skewed to low complexity. Over residues 318–344 (LEERSPAFRGPDRARAAVSRQPDKEFS) the composition is skewed to basic and acidic residues. A compositionally biased stretch (acidic residues) spans 345-356 (FMDEEEEDEIRV).

The protein belongs to the BORG/CEP family. As to quaternary structure, interacts with CDC42 and RHOQ, in a GTP-dependent manner. Not detected in any of the adult tissues tested. May be expressed only in fetal or embryonic tissues.

The protein localises to the endomembrane system. The protein resides in the cytoplasm. Its subcellular location is the cytoskeleton. Its function is as follows. Probably involved in the organization of the actin cytoskeleton. May act downstream of CDC42 to induce actin filament assembly leading to cell shape changes. Induces pseudopodia formation, when overexpressed in fibroblasts. This Homo sapiens (Human) protein is Cdc42 effector protein 4 (CDC42EP4).